The sequence spans 5121 residues: Hydrocephalus-inducing protein homolog (5121 aa).

Residues 363-754 (EFFEECITDP…VLFSSPTPSG (392 aa)) are interaction with KIF9. Residues 956–967 (LSKKGRVKKGHA) are compositionally biased toward basic residues. Disordered stretches follow at residues 956–987 (LSKK…SPVF), 1925–1951 (LAQE…TSLS), 2155–2186 (SKAD…LPPG), 2333–2459 (EQER…KFKT), 2482–2534 (LPPA…AERE), 2664–2684 (TNTT…KQKM), and 3852–3874 (KPDH…TGST). Residues 1908–1933 (EIKKSKEEQMRAKYLENLAQENEEED) are a coiled coil. A compositionally biased stretch (polar residues) spans 1936 to 1951 (SSDQGTSNSTKRTSLS). Residues 2267–2365 (AQDYAAMKAQ…EDELKRRVKK (99 aa)) adopt a coiled-coil conformation. 5 stretches are compositionally biased toward basic and acidic residues: residues 2333–2360 (EQER…DELK), 2393–2418 (VDVK…EELN), 2444–2453 (DNSKDPDKQL), 2489–2498 (EAPHEPDDQR), and 2509–2534 (KDRE…AERE). Residues 2504-2549 (GRRGRKDRERERLEKERTEKERLEREKAERERLEKLRALEERSDWE) are a coiled coil. Composition is skewed to polar residues over residues 2664 to 2679 (TNTT…SSKG) and 3857 to 3874 (GSAQ…TGST).

In terms of assembly, interacts with KIF9.

The protein resides in the cell projection. It is found in the cilium. The protein localises to the cytoplasm. Its subcellular location is the cytoskeleton. It localises to the cilium axoneme. The protein resides in the flagellum. Its function is as follows. Required for ciliary motility. This is Hydrocephalus-inducing protein homolog (HYDIN) from Homo sapiens (Human).